The primary structure comprises 248 residues: Orotidine 5'-phosphate decarboxylase (248 aa).

Substrate contacts are provided by residues D22, K44, 71–80 (DLKFHDIPNT), T131, R192, Q201, G221, and R222. Residue K73 is the Proton donor of the active site.

It belongs to the OMP decarboxylase family. Type 1 subfamily. In terms of assembly, homodimer.

The enzyme catalyses orotidine 5'-phosphate + H(+) = UMP + CO2. It functions in the pathway pyrimidine metabolism; UMP biosynthesis via de novo pathway; UMP from orotate: step 2/2. Functionally, catalyzes the decarboxylation of orotidine 5'-monophosphate (OMP) to uridine 5'-monophosphate (UMP). This Photorhabdus laumondii subsp. laumondii (strain DSM 15139 / CIP 105565 / TT01) (Photorhabdus luminescens subsp. laumondii) protein is Orotidine 5'-phosphate decarboxylase.